A 273-amino-acid polypeptide reads, in one-letter code: Pantothenate synthetase (273 aa).

27–34 contributes to the ATP binding site; sequence MGALHAGH. The Proton donor role is filled by His-34. Gln-58 is a binding site for (R)-pantoate. Residue Gln-58 coordinates beta-alanine. Residue 144 to 147 coordinates ATP; the sequence is GKKD. A (R)-pantoate-binding site is contributed by Gln-150. Residues Val-173 and 181 to 184 each bind ATP; that span reads LSSR.

The protein belongs to the pantothenate synthetase family. Homodimer.

The protein resides in the cytoplasm. The catalysed reaction is (R)-pantoate + beta-alanine + ATP = (R)-pantothenate + AMP + diphosphate + H(+). The protein operates within cofactor biosynthesis; (R)-pantothenate biosynthesis; (R)-pantothenate from (R)-pantoate and beta-alanine: step 1/1. Functionally, catalyzes the condensation of pantoate with beta-alanine in an ATP-dependent reaction via a pantoyl-adenylate intermediate. In Campylobacter hominis (strain ATCC BAA-381 / DSM 21671 / CCUG 45161 / LMG 19568 / NCTC 13146 / CH001A), this protein is Pantothenate synthetase.